The primary structure comprises 294 residues: Signal peptidase I (294 aa).

A disordered region spans residues 1–59 (MTETTDSPSERQPGPAEPELSSRDPDIAGQVFDAAPFDAAPDADSEGDSKAAKTDEPRP). The Cytoplasmic segment spans residues 1 to 66 (MTETTDSPSE…PRPAKRSTLR (66 aa)). Positions 47-59 (GDSKAAKTDEPRP) are enriched in basic and acidic residues. A helical membrane pass occupies residues 67–87 (EFAVLAVIAVVLYYVMLTFVA). At 88-294 (RPYLIPSESM…VRSVNPQQGR (207 aa)) the chain is on the extracellular side. Active-site residues include Ser96 and Lys174.

This sequence belongs to the peptidase S26 family.

The protein resides in the cell membrane. It carries out the reaction Cleavage of hydrophobic, N-terminal signal or leader sequences from secreted and periplasmic proteins.. In Mycobacterium tuberculosis (strain CDC 1551 / Oshkosh), this protein is Signal peptidase I (lepB).